The sequence spans 325 residues: Delta(1)-pyrroline-2-carboxylate reductase (325 aa).

This sequence belongs to the ornithine cyclodeaminase/mu-crystallin family.

The catalysed reaction is L-proline + NAD(+) = 1-pyrroline-2-carboxylate + NADH + H(+). It catalyses the reaction L-proline + NADP(+) = 1-pyrroline-2-carboxylate + NADPH + H(+). Its function is as follows. Catalyzes the reduction of Delta(1)-pyrroline-2-carboxylate (Pyr2C) to L-proline, using preferentially NADPH over NADH as the electron donor. May be involved in a degradation pathway that converts trans-3-hydroxy-L-proline (t3LHyp) to L-proline. The sequence is that of Delta(1)-pyrroline-2-carboxylate reductase from Bacillus cereus (strain ZK / E33L).